Consider the following 412-residue polypeptide: Serine hydroxymethyltransferase (412 aa).

(6S)-5,6,7,8-tetrahydrofolate contacts are provided by residues Leu116 and 120–122 (GHL). Lys225 bears the N6-(pyridoxal phosphate)lysine mark. Residues Glu241 and 350 to 352 (SPF) contribute to the (6S)-5,6,7,8-tetrahydrofolate site.

It belongs to the SHMT family. As to quaternary structure, homodimer. Pyridoxal 5'-phosphate serves as cofactor.

The protein localises to the cytoplasm. It catalyses the reaction (6R)-5,10-methylene-5,6,7,8-tetrahydrofolate + glycine + H2O = (6S)-5,6,7,8-tetrahydrofolate + L-serine. Its pathway is one-carbon metabolism; tetrahydrofolate interconversion. The protein operates within amino-acid biosynthesis; glycine biosynthesis; glycine from L-serine: step 1/1. Its function is as follows. Catalyzes the reversible interconversion of serine and glycine with tetrahydrofolate (THF) serving as the one-carbon carrier. This reaction serves as the major source of one-carbon groups required for the biosynthesis of purines, thymidylate, methionine, and other important biomolecules. Also exhibits THF-independent aldolase activity toward beta-hydroxyamino acids, producing glycine and aldehydes, via a retro-aldol mechanism. The chain is Serine hydroxymethyltransferase from Enterococcus faecalis (strain ATCC 700802 / V583).